We begin with the raw amino-acid sequence, 298 residues long: Oxygen-dependent coproporphyrinogen-III oxidase (298 aa).

Position 90 (S90) interacts with substrate. 2 residues coordinate a divalent metal cation: H94 and H104. The active-site Proton donor is H104. Residue 106–108 participates in substrate binding; it reads NVR. The a divalent metal cation site is built by H143 and H173. The interval 238–273 is important for dimerization; it reads YVEFNLVWDRGTLFGLQSGGRTESILMSLPPIVKWR. 256–258 contacts substrate; the sequence is GGR.

It belongs to the aerobic coproporphyrinogen-III oxidase family. As to quaternary structure, homodimer. A divalent metal cation is required as a cofactor.

The protein resides in the cytoplasm. The catalysed reaction is coproporphyrinogen III + O2 + 2 H(+) = protoporphyrinogen IX + 2 CO2 + 2 H2O. Its pathway is porphyrin-containing compound metabolism; protoporphyrin-IX biosynthesis; protoporphyrinogen-IX from coproporphyrinogen-III (O2 route): step 1/1. In terms of biological role, involved in the heme biosynthesis. Catalyzes the aerobic oxidative decarboxylation of propionate groups of rings A and B of coproporphyrinogen-III to yield the vinyl groups in protoporphyrinogen-IX. The sequence is that of Oxygen-dependent coproporphyrinogen-III oxidase from Dechloromonas aromatica (strain RCB).